Here is a 232-residue protein sequence, read N- to C-terminus: Ubiquinone biosynthesis O-methyltransferase (232 aa).

Residues Arg-36, Gly-55, Asp-76, and Met-120 each coordinate S-adenosyl-L-methionine.

It belongs to the methyltransferase superfamily. UbiG/COQ3 family.

It carries out the reaction a 3-demethylubiquinol + S-adenosyl-L-methionine = a ubiquinol + S-adenosyl-L-homocysteine + H(+). The enzyme catalyses a 3-(all-trans-polyprenyl)benzene-1,2-diol + S-adenosyl-L-methionine = a 2-methoxy-6-(all-trans-polyprenyl)phenol + S-adenosyl-L-homocysteine + H(+). The protein operates within cofactor biosynthesis; ubiquinone biosynthesis. O-methyltransferase that catalyzes the 2 O-methylation steps in the ubiquinone biosynthetic pathway. This chain is Ubiquinone biosynthesis O-methyltransferase, found in Burkholderia thailandensis (strain ATCC 700388 / DSM 13276 / CCUG 48851 / CIP 106301 / E264).